Consider the following 155-residue polypeptide: SsrA-binding protein (155 aa).

This sequence belongs to the SmpB family.

It is found in the cytoplasm. Its function is as follows. Required for rescue of stalled ribosomes mediated by trans-translation. Binds to transfer-messenger RNA (tmRNA), required for stable association of tmRNA with ribosomes. tmRNA and SmpB together mimic tRNA shape, replacing the anticodon stem-loop with SmpB. tmRNA is encoded by the ssrA gene; the 2 termini fold to resemble tRNA(Ala) and it encodes a 'tag peptide', a short internal open reading frame. During trans-translation Ala-aminoacylated tmRNA acts like a tRNA, entering the A-site of stalled ribosomes, displacing the stalled mRNA. The ribosome then switches to translate the ORF on the tmRNA; the nascent peptide is terminated with the 'tag peptide' encoded by the tmRNA and targeted for degradation. The ribosome is freed to recommence translation, which seems to be the essential function of trans-translation. This chain is SsrA-binding protein, found in Helicobacter hepaticus (strain ATCC 51449 / 3B1).